The following is a 302-amino-acid chain: Bifunctional phosphoglucose/phosphomannose isomerase (302 aa).

One can recognise an SIS domain in the interval 27 to 160 (VEGEVVRIEA…KVYGIDVKIP (134 aa)). D-fructose 6-phosphate is bound by residues glycine 47, serine 48, serine 87, serine 89, threonine 92, and arginine 135. Residues glycine 47, serine 48, serine 87, serine 89, threonine 92, and arginine 135 each contribute to the D-glucose 6-phosphate site. The Proton acceptor role is filled by glutamate 203. Residues histidine 219 and lysine 298 each coordinate D-fructose 6-phosphate. The D-glucose 6-phosphate site is built by histidine 219 and lysine 298. Histidine 219 (proton donor) is an active-site residue. Lysine 298 (proton acceptor) is an active-site residue.

This sequence belongs to the PGI/PMI family. As to quaternary structure, homodimer.

It is found in the cytoplasm. The enzyme catalyses alpha-D-glucose 6-phosphate = beta-D-fructose 6-phosphate. It catalyses the reaction D-mannose 6-phosphate = D-fructose 6-phosphate. Its activity is regulated as follows. Inhibited by 5-phosphoarabinonate (PAB) and 6-phosphogluconate. Functionally, dual specificity isomerase that catalyzes the isomerization of both glucose-6-phosphate and mannose-6-phosphate to fructose-6-phosphate with similar catalytic efficiency. The chain is Bifunctional phosphoglucose/phosphomannose isomerase from Pyrobaculum aerophilum (strain ATCC 51768 / DSM 7523 / JCM 9630 / CIP 104966 / NBRC 100827 / IM2).